Reading from the N-terminus, the 510-residue chain is Sucrose transport protein SUC4 (510 aa).

Residues 1 to 34 form a disordered region; it reads MATSDQDRRHRVTRNRPPIARPSTSSSRPVVSPP. The Cytoplasmic portion of the chain corresponds to 1–45; sequence MATSDQDRRHRVTRNRPPIARPSTSSSRPVVSPPRSKVSKRVLLR. Residues 21-34 show a composition bias toward low complexity; that stretch reads RPSTSSSRPVVSPP. Ser23 carries the post-translational modification Phosphoserine. A helical membrane pass occupies residues 46 to 66; that stretch reads VASVACGIQFGWALQLSLLTP. Over 67–71 the chain is Extracellular; that stretch reads YVQEL. Residues 72–92 traverse the membrane as a helical segment; sequence GIPHAWASVIWLCGPLSGLFV. The Cytoplasmic portion of the chain corresponds to 93–111; sequence QPLVGHSSDRCTSKYGRRR. A helical transmembrane segment spans residues 112 to 132; sequence PFIVAGAVAISISVMVIGHAA. At 133–148 the chain is on the extracellular side; sequence DIGWAFGDREGKIKPR. The helical transmembrane segment at 149–169 threads the bilayer; sequence AIVAFVLGFWILDVANNMTQG. Residues 170–187 are Cytoplasmic-facing; that stretch reads PCRALLADLTENDNRRTR. The helical transmembrane segment at 188 to 208 threads the bilayer; that stretch reads VANGYFSLFMAVGNVLGYATG. The Extracellular segment spans residues 209–233; sequence SYNGWYKIFTFTKTVACNVECANLK. A helical membrane pass occupies residues 234 to 254; the sequence is SAFYIDVVFIAITTILSVSAA. Topologically, residues 255–291 are cytoplasmic; the sequence is HEVPLASLASEAHGQTSGTDEAFLSEIFGTFRYFPGN. The chain crosses the membrane as a helical span at residues 292–312; it reads VWIILLVTALTWIGWFPFILF. The Extracellular segment spans residues 313–335; that stretch reads DTDWMGREIYGGEPNIGTSYSAG. Residues 336–356 traverse the membrane as a helical segment; that stretch reads VSMGALGLMLNSVFLGITSVL. The Cytoplasmic segment spans residues 357 to 365; it reads MEKLCRKWG. Residues 366-386 traverse the membrane as a helical segment; it reads AGFVWGISNILMAICFLGMII. Over 387-402 the chain is Extracellular; the sequence is TSFVASHLGYIGHEQP. A helical transmembrane segment spans residues 403–423; that stretch reads PASIVFAAVLIFTILGIPLAI. Topologically, residues 424 to 443 are cytoplasmic; it reads TYSVPYALISIRIESLGLGQ. The chain crosses the membrane as a helical span at residues 444–464; it reads GLSLGVLNLAIVIPQVIVSVG. Over 465 to 477 the chain is Extracellular; the sequence is SGPWDQLFGGGNS. A helical membrane pass occupies residues 478-498; sequence PALAVGAATGFIGGIVAILAL. The Cytoplasmic portion of the chain corresponds to 499–510; sequence PRTRIQKPIPLP.

This sequence belongs to the glycoside-pentoside-hexuronide (GPH) cation symporter transporter (TC 2.A.2.4) family. Homodimer. Interacts with SUC2 and SUC3. Expressed in sink tissues, mostly in minor veins of sink leaves. Localized in companion cells.

It is found in the cell membrane. It carries out the reaction sucrose(out) + H(+)(out) = sucrose(in) + H(+)(in). The protein operates within glycan biosynthesis; sucrose metabolism. Its function is as follows. Responsible for the transport of sucrose into the cell, with the concomitant uptake of protons (symport system). Can also transport maltose at a lesser rate. May also transport biotin. This chain is Sucrose transport protein SUC4, found in Arabidopsis thaliana (Mouse-ear cress).